The chain runs to 66 residues: Conotoxin PnMLCL-01 (66 aa).

The N-terminal stretch at 1–19 is a signal peptide; sequence MLCLPVFIILLLLASPAAS. The propeptide occupies 20-45; the sequence is NPLEKRIQSDLIRAALEDADTKNDPR. Cys63 is subject to Cysteine amide.

Belongs to the conotoxin T superfamily. Post-translationally, contains 2 disulfide bonds that can be either 'C1-C3, C2-C4' or 'C1-C4, C2-C3', since these disulfide connectivities have been observed for conotoxins with cysteine framework V (for examples, see AC P0DQQ7 and AC P81755). In terms of tissue distribution, expressed by the venom duct.

It localises to the secreted. The protein is Conotoxin PnMLCL-01 of Conus pennaceus (Feathered cone).